Reading from the N-terminus, the 350-residue chain is DNA-directed RNA polymerase subunit alpha (350 aa).

The alpha N-terminal domain (alpha-NTD) stretch occupies residues Met-1–Asn-226. An alpha C-terminal domain (alpha-CTD) region spans residues Ala-241–Leu-350. The interval Gly-328–Leu-350 is disordered. The segment covering Tyr-336–Leu-350 has biased composition (acidic residues).

The protein belongs to the RNA polymerase alpha chain family. In terms of assembly, homodimer. The RNAP catalytic core consists of 2 alpha, 1 beta, 1 beta' and 1 omega subunit. When a sigma factor is associated with the core the holoenzyme is formed, which can initiate transcription.

The catalysed reaction is RNA(n) + a ribonucleoside 5'-triphosphate = RNA(n+1) + diphosphate. Functionally, DNA-dependent RNA polymerase catalyzes the transcription of DNA into RNA using the four ribonucleoside triphosphates as substrates. In Mycolicibacterium vanbaalenii (strain DSM 7251 / JCM 13017 / BCRC 16820 / KCTC 9966 / NRRL B-24157 / PYR-1) (Mycobacterium vanbaalenii), this protein is DNA-directed RNA polymerase subunit alpha.